A 373-amino-acid polypeptide reads, in one-letter code: UDP-N-acetylglucosamine--N-acetylmuramyl-(pentapeptide) pyrophosphoryl-undecaprenol N-acetylglucosamine transferase (373 aa).

Residues 13–15, N124, R165, S192, and Q293 contribute to the UDP-N-acetyl-alpha-D-glucosamine site; that span reads TGG.

Belongs to the glycosyltransferase 28 family. MurG subfamily.

It localises to the cell inner membrane. It carries out the reaction di-trans,octa-cis-undecaprenyl diphospho-N-acetyl-alpha-D-muramoyl-L-alanyl-D-glutamyl-meso-2,6-diaminopimeloyl-D-alanyl-D-alanine + UDP-N-acetyl-alpha-D-glucosamine = di-trans,octa-cis-undecaprenyl diphospho-[N-acetyl-alpha-D-glucosaminyl-(1-&gt;4)]-N-acetyl-alpha-D-muramoyl-L-alanyl-D-glutamyl-meso-2,6-diaminopimeloyl-D-alanyl-D-alanine + UDP + H(+). Its pathway is cell wall biogenesis; peptidoglycan biosynthesis. In terms of biological role, cell wall formation. Catalyzes the transfer of a GlcNAc subunit on undecaprenyl-pyrophosphoryl-MurNAc-pentapeptide (lipid intermediate I) to form undecaprenyl-pyrophosphoryl-MurNAc-(pentapeptide)GlcNAc (lipid intermediate II). The protein is UDP-N-acetylglucosamine--N-acetylmuramyl-(pentapeptide) pyrophosphoryl-undecaprenol N-acetylglucosamine transferase of Sinorhizobium fredii (strain NBRC 101917 / NGR234).